We begin with the raw amino-acid sequence, 461 residues long: Tubulin gamma chain (461 aa).

142 to 148 is a GTP binding site; the sequence is AGGTGSG.

It belongs to the tubulin family.

It localises to the cytoplasm. Its subcellular location is the cytoskeleton. The protein resides in the microtubule organizing center. The protein localises to the spindle pole body. Its function is as follows. Tubulin is the major constituent of microtubules. The gamma chain is found at microtubule organizing centers (MTOC) such as the spindle poles or the centrosome, suggesting that it is involved in the minus-end nucleation of microtubule assembly. This chain is Tubulin gamma chain (tbg), found in Neurospora crassa (strain ATCC 24698 / 74-OR23-1A / CBS 708.71 / DSM 1257 / FGSC 987).